Reading from the N-terminus, the 244-residue chain is Robin (244 aa).

This is Robin from Acanthamoeba polyphaga (Amoeba).